Reading from the N-terminus, the 750-residue chain is MENLFGAKRLTATVGGKEIIMETGRLANQADGAVWIQCGGTVVLCTVCTQPLEREISFFPLVVDYTEKMYAAGRIPGSFFRREIGRPSERETLVSRLIDRPLRPLFPKGFTNEVQILANVISADQENDSDVLALCGSSAAVMLSSVPFEAPVAGARVCRIDGEFVLNPTITEAAKADLNLVVAANRDALVMVEGEADFVPEEVIAQALEWAHREVQPIIDMQEKLRELAGKAKIEFVAPEEDTELKEKAEALATADLAAALQVREKMARKEAKKAVKEKVKAALLQDPAFAETPERLAALGDILSSLEKRIVRQRILKEGLRIDGRDTKTVRPIIIEAGALPRAHGSAIFSRGETKSLVVTTLGSTTDEQRMDSLTGDVTKRFMLHYNFPPYSVGEVKPVRVSRREIGHGALAERALRPVLPSPDSFPFTLRVVSETMESNGSSSMAAVCGGSLSLMDAGVPVKAPVAGIAMGLIKEDDQFIVLTDILGDEDALGDMDFKIAGTAEGVTAVQMDIKIDGLPAEVMGRALAQAREARLHILNEMAKVLPEPRQALSKYAPQLSVVEVNPEIIRVIIGPGGKNIKAITSATGASIDIEDSGRISIFAPTKESMDMAREMVMYYDQRPELGKNYTAKVRKIMEIGAIVEILPNCEALIHISQLDTSRVEKTEDVVQLGQDVEVKVIEINDGRVRASRKAVMLEAQGVEWDPADTARPPRKPRDRDDRGDRGGRGDRGDRGGRNGRGGDRRDRR.

Mg(2+)-binding residues include Asp492 and Asp498. The KH domain maps to 559–618 (PQLSVVEVNPEIIRVIIGPGGKNIKAITSATGASIDIEDSGRISIFAPTKESMDMAREMV). The region spanning 628 to 695 (GKNYTAKVRK…NDGRVRASRK (68 aa)) is the S1 motif domain. Positions 705 to 750 (EWDPADTARPPRKPRDRDDRGDRGGRGDRGDRGGRNGRGGDRRDRR) are disordered. Residues 717–750 (KPRDRDDRGDRGGRGDRGDRGGRNGRGGDRRDRR) are compositionally biased toward basic and acidic residues.

The protein belongs to the polyribonucleotide nucleotidyltransferase family. It depends on Mg(2+) as a cofactor.

The protein localises to the cytoplasm. It carries out the reaction RNA(n+1) + phosphate = RNA(n) + a ribonucleoside 5'-diphosphate. Its function is as follows. Involved in mRNA degradation. Catalyzes the phosphorolysis of single-stranded polyribonucleotides processively in the 3'- to 5'-direction. The chain is Polyribonucleotide nucleotidyltransferase from Oleidesulfovibrio alaskensis (strain ATCC BAA-1058 / DSM 17464 / G20) (Desulfovibrio alaskensis).